We begin with the raw amino-acid sequence, 874 residues long: Alanine--tRNA ligase (874 aa).

Residues histidine 564, histidine 568, cysteine 665, and histidine 669 each contribute to the Zn(2+) site.

The protein belongs to the class-II aminoacyl-tRNA synthetase family. Zn(2+) serves as cofactor.

Its subcellular location is the cytoplasm. The enzyme catalyses tRNA(Ala) + L-alanine + ATP = L-alanyl-tRNA(Ala) + AMP + diphosphate. In terms of biological role, catalyzes the attachment of alanine to tRNA(Ala) in a two-step reaction: alanine is first activated by ATP to form Ala-AMP and then transferred to the acceptor end of tRNA(Ala). Also edits incorrectly charged Ser-tRNA(Ala) and Gly-tRNA(Ala) via its editing domain. This Burkholderia mallei (strain ATCC 23344) protein is Alanine--tRNA ligase.